The sequence spans 315 residues: Melanocyte-stimulating hormone receptor (315 aa).

Over 1–35 (MSTQEPQKSLLGSLNSNATSHLGLATNQSEPWCLY) the chain is Extracellular. N-linked (GlcNAc...) asparagine glycans are attached at residues asparagine 17 and asparagine 27. A helical membrane pass occupies residues 36-61 (VSIPDGLFLSLGLVSLVENVLVVIAI). Over 62–70 (TKNRNLHSP) the chain is Cytoplasmic. A helical transmembrane segment spans residues 71–91 (MYYFICCLALSDLMVSVSIVL). Residues 92 to 116 (ETTIILLLEAGILVARVALVQQLDN) are Extracellular-facing. Residues 117 to 138 (LIDVLICGSMVSSLCFLGIIAI) form a helical membrane-spanning segment. The Cytoplasmic portion of the chain corresponds to 139 to 161 (DRYISIFYALRYHSIVTLPRARR). A helical transmembrane segment spans residues 162–181 (AVVGIWMVSIVSSTLFITYY). Residues 182 to 189 (KHTAVLLC) lie on the Extracellular side of the membrane. A helical transmembrane segment spans residues 190–209 (LVTFFLAMLALMAILYAHMF). The Cytoplasmic portion of the chain corresponds to 210-238 (TRACQHAQGIAQLHKRRRSIRQGFCLKGA). A helical membrane pass occupies residues 239 to 264 (ATLTILLGIFFLCWGPFFLHLLLIVL). Residues 265-277 (CPQHPTCSCIFKN) lie on the Extracellular side of the membrane. A helical transmembrane segment spans residues 278–298 (FNLFLLLIVLSSTVDPLIYAF). The Cytoplasmic portion of the chain corresponds to 299 to 315 (RSQELRMTLKEVLLCSW). Residue cysteine 313 is the site of S-palmitoyl cysteine attachment.

It belongs to the G-protein coupled receptor 1 family. In terms of assembly, interacts with MGRN1, but does not undergo MGRN1-mediated ubiquitination; this interaction competes with GNAS-binding and thus inhibits agonist-induced cAMP production. Interacts with OPN3; the interaction results in a decrease in MC1R-mediated cAMP signaling and ultimately a decrease in melanin production in melanocytes.

Its subcellular location is the cell membrane. Receptor for MSH (alpha, beta and gamma) and ACTH. The activity of this receptor is mediated by G proteins which activate adenylate cyclase. Mediates melanogenesis, the production of eumelanin (black/brown) and phaeomelanin (red/yellow), via regulation of cAMP signaling in melanocytes. This is Melanocyte-stimulating hormone receptor (Mc1r) from Mus musculus (Mouse).